A 514-amino-acid polypeptide reads, in one-letter code: Proline--tRNA ligase (514 aa).

It belongs to the class-II aminoacyl-tRNA synthetase family. ProS type 3 subfamily. Homodimer.

The protein resides in the cytoplasm. The enzyme catalyses tRNA(Pro) + L-proline + ATP = L-prolyl-tRNA(Pro) + AMP + diphosphate. Functionally, catalyzes the attachment of proline to tRNA(Pro) in a two-step reaction: proline is first activated by ATP to form Pro-AMP and then transferred to the acceptor end of tRNA(Pro). This Erythrobacter litoralis (strain HTCC2594) protein is Proline--tRNA ligase.